Consider the following 402-residue polypeptide: Propionate kinase (402 aa).

Residues Asn-11 and Lys-18 each coordinate ATP. Asn-11 contributes to the Mg(2+) binding site. Arg-86 contacts substrate. Asp-143 (proton donor/acceptor) is an active-site residue. ATP-binding positions include His-175, 203-207 (HLGNG), 278-280 (DLR), and 326-330 (GIGEN).

It belongs to the acetokinase family. TdcD subfamily. Homodimer. Requires Mg(2+) as cofactor.

The catalysed reaction is propanoate + ATP = propanoyl phosphate + ADP. The protein operates within amino-acid degradation; L-threonine degradation via propanoate pathway; propanoate from L-threonine: step 4/4. Functionally, catalyzes the conversion of propionyl phosphate and ADP to propionate and ATP. The protein is Propionate kinase of Edwardsiella piscicida.